Consider the following 314-residue polypeptide: Protein phosphatase PTC7 homolog fig (314 aa).

The region spanning 43–309 (PYLVTVVQGR…DDITLILSSV (267 aa)) is the PPM-type phosphatase domain. Mn(2+) is bound by residues aspartate 87, glycine 88, and aspartate 232.

The protein belongs to the PP2C family. Mg(2+) serves as cofactor. It depends on Mn(2+) as a cofactor.

The enzyme catalyses O-phospho-L-seryl-[protein] + H2O = L-seryl-[protein] + phosphate. It carries out the reaction O-phospho-L-threonyl-[protein] + H2O = L-threonyl-[protein] + phosphate. In Drosophila simulans (Fruit fly), this protein is Protein phosphatase PTC7 homolog fig.